The following is a 131-amino-acid chain: Phosphoribosyl-AMP cyclohydrolase (131 aa).

Aspartate 89 is a binding site for Mg(2+). Position 90 (cysteine 90) interacts with Zn(2+). 2 residues coordinate Mg(2+): aspartate 91 and aspartate 93. The Zn(2+) site is built by cysteine 106 and cysteine 113.

The protein belongs to the PRA-CH family. Homodimer. Mg(2+) serves as cofactor. Zn(2+) is required as a cofactor.

It is found in the cytoplasm. The enzyme catalyses 1-(5-phospho-beta-D-ribosyl)-5'-AMP + H2O = 1-(5-phospho-beta-D-ribosyl)-5-[(5-phospho-beta-D-ribosylamino)methylideneamino]imidazole-4-carboxamide. The protein operates within amino-acid biosynthesis; L-histidine biosynthesis; L-histidine from 5-phospho-alpha-D-ribose 1-diphosphate: step 3/9. Its function is as follows. Catalyzes the hydrolysis of the adenine ring of phosphoribosyl-AMP. This chain is Phosphoribosyl-AMP cyclohydrolase, found in Pyrobaculum aerophilum (strain ATCC 51768 / DSM 7523 / JCM 9630 / CIP 104966 / NBRC 100827 / IM2).